Here is a 241-residue protein sequence, read N- to C-terminus: tRNA (guanine-N(7)-)-methyltransferase (241 aa).

The segment covering 1 to 10 has biased composition (polar residues); it reads MTESNDTPIQ. The tract at residues 1 to 20 is disordered; it reads MTESNDTPIQTEEGDERQHR. S-adenosyl-L-methionine-binding residues include Glu71, Glu96, Asp123, and Asp146. Asp146 is a catalytic residue. Substrate is bound by residues Lys150, Asp182, and 219-222; that span reads TKFE.

It belongs to the class I-like SAM-binding methyltransferase superfamily. TrmB family.

The catalysed reaction is guanosine(46) in tRNA + S-adenosyl-L-methionine = N(7)-methylguanosine(46) in tRNA + S-adenosyl-L-homocysteine. Its pathway is tRNA modification; N(7)-methylguanine-tRNA biosynthesis. Its function is as follows. Catalyzes the formation of N(7)-methylguanine at position 46 (m7G46) in tRNA. In Pseudomonas fluorescens (strain Pf0-1), this protein is tRNA (guanine-N(7)-)-methyltransferase.